The chain runs to 241 residues: Uridylate kinase (241 aa).

Residue 14–17 (KASG) coordinates ATP. An involved in allosteric activation by GTP region spans residues 22–27 (GDQGFG). G56 is a binding site for UMP. Residues G57 and R61 each coordinate ATP. Residues D76 and 137 to 144 (TGNPFFTT) contribute to the UMP site. 4 residues coordinate ATP: T164, Q165, Y170, and D173.

The protein belongs to the UMP kinase family. As to quaternary structure, homohexamer.

The protein localises to the cytoplasm. It carries out the reaction UMP + ATP = UDP + ADP. It participates in pyrimidine metabolism; CTP biosynthesis via de novo pathway; UDP from UMP (UMPK route): step 1/1. Its activity is regulated as follows. Allosterically activated by GTP. Inhibited by UTP. In terms of biological role, catalyzes the reversible phosphorylation of UMP to UDP. The protein is Uridylate kinase of Agrobacterium fabrum (strain C58 / ATCC 33970) (Agrobacterium tumefaciens (strain C58)).